Consider the following 313-residue polypeptide: Undecaprenyl-diphosphatase (313 aa).

Helical transmembrane passes span 121–141 (YRIG…GFLF), 152–172 (LWLV…AEHY), 187–207 (GLVM…RSGA), 225–245 (FSFL…LPDA), 259–279 (QLLV…AWLL), and 290–310 (FVGY…AGVI).

It belongs to the UppP family.

It localises to the cell membrane. It catalyses the reaction di-trans,octa-cis-undecaprenyl diphosphate + H2O = di-trans,octa-cis-undecaprenyl phosphate + phosphate + H(+). In terms of biological role, catalyzes the dephosphorylation of undecaprenyl diphosphate (UPP). Confers resistance to bacitracin. This is Undecaprenyl-diphosphatase from Nocardia farcinica (strain IFM 10152).